The following is a 224-amino-acid chain: Mammalian ependymin-related protein 1 (224 aa).

An N-terminal signal peptide occupies residues 1-37; that stretch reads MPGRAPLHTVPGALGPWLLGCLWAWTLCGLCSLGAVG. Disulfide bonds link C42/C172, C88/C222, and C113/C210. N-linked (GlcNAc...) asparagine glycans are attached at residues N130 and N182.

It belongs to the ependymin family. Homodimer. In terms of processing, N-glycosylated; the glycan contains mannose-6-phosphate moieties.

Its subcellular location is the lysosome lumen. It is found in the secreted. Its function is as follows. Binds anionic lipids and gangliosides at acidic pH. The sequence is that of Mammalian ependymin-related protein 1 (EPDR1) from Macaca fascicularis (Crab-eating macaque).